The sequence spans 308 residues: Cysteine proteinase 3 (308 aa).

The N-terminal stretch at 1–13 is a signal peptide; sequence MFALILFVSLACA. A propeptide spans 14–92 (activation peptide); sequence NEVAFKQWAA…TSNVKAAVKA (79 aa). Intrachain disulfides connect Cys-112–Cys-153 and Cys-146–Cys-186. Cys-115 is a catalytic residue. Residues His-251 and Asn-271 contribute to the active site.

It belongs to the peptidase C1 family.

It is found in the cytoplasm. It localises to the cytoplasmic vesicle. The protein resides in the phagosome. The enzyme catalyses Hydrolysis of proteins, including basement membrane collagen and azocasein. Preferential cleavage: Arg-Arg-|-Xaa in small molecule substrates including Z-Arg-Arg-|-NHMec.. Its function is as follows. Cysteine protease which may be involved in pathogenicity. The polypeptide is Cysteine proteinase 3 (Entamoeba histolytica (strain ATCC 30459 / HM-1:IMSS / ABRM)).